A 289-amino-acid chain; its full sequence is Diaminopimelate epimerase (289 aa).

The substrate site is built by N17, Q47, and N67. Catalysis depends on C76, which acts as the Proton donor. Substrate-binding positions include 77-78 (GN), N164, N198, and 216-217 (ER). C225 functions as the Proton acceptor in the catalytic mechanism. 226–227 (GS) lines the substrate pocket.

Belongs to the diaminopimelate epimerase family. In terms of assembly, homodimer.

It is found in the cytoplasm. It carries out the reaction (2S,6S)-2,6-diaminopimelate = meso-2,6-diaminopimelate. Its pathway is amino-acid biosynthesis; L-lysine biosynthesis via DAP pathway; DL-2,6-diaminopimelate from LL-2,6-diaminopimelate: step 1/1. Catalyzes the stereoinversion of LL-2,6-diaminopimelate (L,L-DAP) to meso-diaminopimelate (meso-DAP), a precursor of L-lysine and an essential component of the bacterial peptidoglycan. This Bradyrhizobium sp. (strain ORS 278) protein is Diaminopimelate epimerase.